The chain runs to 2641 residues: Inverse autotransporter adhesin YeeJ (2641 aa).

Positions 1–26 (MGIKLRRLTAGICLVTQLAFPMAAAA) are cleaved as a signal peptide. The 49-residue stretch at 50 to 98 (VPYILGALESAQSVAERFGISVAELRKLNQFRTFARGFDNVRQGDELDV) folds into the LysM domain. Residues 99–118 (PAQVSEKKLTPPPGNSSDNL) form a disordered region. The segment at 125–400 (TSQQIGSLLA…SRYDLVDRNN (276 aa)) is inverse autotransporter. The segment at 513–605 (QKDSSVSLST…GVDAAKAPAV (93 aa)) is invasin 3 domain. Big-1 domains follow at residues 617–711 (HSSI…AGFI), 721–815 (IATL…VSFV), 822–913 (QVDL…VNFI), 920–1017 (ALTL…MTFV), 1024–1116 (VVVL…VNIA), 1123–1220 (QVTL…VTFV), 1227–1319 (VVVL…VNIA), 1326–1423 (QVTL…VTFV), 1430–1523 (QVVL…VHFI), 1531–1633 (IIEL…SINV), 1641–1734 (HLTL…VTYV), 1741–1837 (EISL…VNFT), 1844–1941 (QVNL…VTLI), 1948–2032 (KLTS…PTEV), 2048–2139 (FTSL…LEAI), 2142–2236 (KLTL…VKVT), and 2244–2336 (VASF…ITLV). Residues 2538–2641 (KSWWVNAGDA…FAHATCYKNL (104 aa)) form a C-type lectin domain region.

This sequence belongs to the intimin/invasin family.

It is found in the cell outer membrane. In terms of biological role, a probable inverse autotransporter, it may be involved in biofilm formation and cell adhesion. May bind peptidoglycan via its LysM domain. Upon overexpression shows increased mature biofilm formation. This Escherichia coli O17:K52:H18 (strain UMN026 / ExPEC) protein is Inverse autotransporter adhesin YeeJ.